Consider the following 376-residue polypeptide: Dual-specificity RNA methyltransferase RlmN (376 aa).

Residue E96 is the Proton acceptor of the active site. One can recognise a Radical SAM core domain in the interval 102 to 341 (DEDRATLCVS…VVVRKTRGDD (240 aa)). C109 and C346 are oxidised to a cystine. Residues C116, C120, and C123 each coordinate [4Fe-4S] cluster. S-adenosyl-L-methionine-binding positions include 170–171 (GE), S202, 224–226 (SLH), and N303. Residue C346 is the S-methylcysteine intermediate of the active site.

It belongs to the radical SAM superfamily. RlmN family. [4Fe-4S] cluster is required as a cofactor.

Its subcellular location is the cytoplasm. The catalysed reaction is adenosine(2503) in 23S rRNA + 2 reduced [2Fe-2S]-[ferredoxin] + 2 S-adenosyl-L-methionine = 2-methyladenosine(2503) in 23S rRNA + 5'-deoxyadenosine + L-methionine + 2 oxidized [2Fe-2S]-[ferredoxin] + S-adenosyl-L-homocysteine. It catalyses the reaction adenosine(37) in tRNA + 2 reduced [2Fe-2S]-[ferredoxin] + 2 S-adenosyl-L-methionine = 2-methyladenosine(37) in tRNA + 5'-deoxyadenosine + L-methionine + 2 oxidized [2Fe-2S]-[ferredoxin] + S-adenosyl-L-homocysteine. Functionally, specifically methylates position 2 of adenine 2503 in 23S rRNA and position 2 of adenine 37 in tRNAs. m2A2503 modification seems to play a crucial role in the proofreading step occurring at the peptidyl transferase center and thus would serve to optimize ribosomal fidelity. In Pseudoalteromonas atlantica (strain T6c / ATCC BAA-1087), this protein is Dual-specificity RNA methyltransferase RlmN.